The primary structure comprises 175 residues: MIDGDGFRPNVGIVICNRDGQVLWAKRYGQHSWQFPQGGVDDGETPEQAMYRELYEEIGLKPEDVTIMATSRNWLKYRLPKRLVRWDSSPVCIGQKQKWFLLQLDPGRESRIQFGCHGHPEFDDWRWVSFWYPVRQVVSFKREVYRRVMKEFAPLAMPVPAVQVNKKDGRRNRPR.

Positions 6 to 150 constitute a Nudix hydrolase domain; the sequence is GFRPNVGIVI…KREVYRRVMK (145 aa). Positions 38-59 match the Nudix box motif; sequence GGVDDGETPEQAMYRELYEEIG.

It belongs to the Nudix hydrolase family. RppH subfamily. A divalent metal cation is required as a cofactor.

Functionally, accelerates the degradation of transcripts by removing pyrophosphate from the 5'-end of triphosphorylated RNA, leading to a more labile monophosphorylated state that can stimulate subsequent ribonuclease cleavage. This Aeromonas hydrophila subsp. hydrophila (strain ATCC 7966 / DSM 30187 / BCRC 13018 / CCUG 14551 / JCM 1027 / KCTC 2358 / NCIMB 9240 / NCTC 8049) protein is RNA pyrophosphohydrolase.